A 336-amino-acid polypeptide reads, in one-letter code: Large ribosomal subunit protein uL3 (336 aa).

A disordered region spans residues 1-34; sequence MVRHHQPRKGSVAFSPRKRAAKETPRIKSWPQND.

This sequence belongs to the universal ribosomal protein uL3 family. Part of the 50S ribosomal subunit. Forms a cluster with proteins L14 and L24e.

Functionally, one of the primary rRNA binding proteins, it binds directly near the 3'-end of the 23S rRNA, where it nucleates assembly of the 50S subunit. In Methanobrevibacter smithii (strain ATCC 35061 / DSM 861 / OCM 144 / PS), this protein is Large ribosomal subunit protein uL3.